Consider the following 485-residue polypeptide: Acyltransferase cm3D (485 aa).

The Proton acceptor role is filled by H169.

It belongs to the plant acyltransferase family. In terms of assembly, monomer.

It functions in the pathway secondary metabolite biosynthesis. Its function is as follows. Acyltransferase; part of the gene cluster that mediates the biosynthesis of beauveriolides I and III, cyclodepsipeptides acting as inhibitors of the acyl-CoA:cholesterol acyltransferase. The HR-PKS cm3B initiates the biosynthesis of beauveriolides by iteratively catalyzing the formation of the linear polyketide chain. The ATP-dependent acetyl-CoA ligase cm3D converts the polyketide carboxylic acid to a CoA thioester which id shuttled to the first T domain in the NRPS cm3A by the acetyltransferase cm3C. Cm3A contains 13 domains and assembles the polyketide chain, L-phenylalanine, L-alanine, and D-leucine (or D-allo-isoleucine) to form beauveriolide I (or beauveriolide III). The production of both beauveriolides I and III suggests the substrate adaptability of cm3B, using different amino acids as substrates. The chain is Acyltransferase cm3D from Cordyceps militaris (strain CM01) (Caterpillar fungus).